Reading from the N-terminus, the 311-residue chain is Methionyl-tRNA formyltransferase (311 aa).

A disordered region spans residues 33–52 (RPDRPAGRGRHQRSSPVREL). 110-113 (SLLP) is a binding site for (6S)-5,6,7,8-tetrahydrofolate.

The protein belongs to the Fmt family.

It catalyses the reaction L-methionyl-tRNA(fMet) + (6R)-10-formyltetrahydrofolate = N-formyl-L-methionyl-tRNA(fMet) + (6S)-5,6,7,8-tetrahydrofolate + H(+). Functionally, attaches a formyl group to the free amino group of methionyl-tRNA(fMet). The formyl group appears to play a dual role in the initiator identity of N-formylmethionyl-tRNA by promoting its recognition by IF2 and preventing the misappropriation of this tRNA by the elongation apparatus. In Parafrankia sp. (strain EAN1pec), this protein is Methionyl-tRNA formyltransferase.